The sequence spans 339 residues: Meiotic recombination protein rec7 (339 aa).

Its function is as follows. May be involved primarily in the early steps of meiotic recombination. This is Meiotic recombination protein rec7 (rec7) from Schizosaccharomyces pombe (strain 972 / ATCC 24843) (Fission yeast).